The following is a 146-amino-acid chain: Pre-mRNA-splicing factor cwf14 (146 aa).

Belongs to the BUD31 (G10) family. Belongs to the 40S cdc5-associated complex (or cwf complex), a spliceosome sub-complex reminiscent of a late-stage spliceosome composed of the U2, U5 and U6 snRNAs and at least brr2, cdc5, cwf2/prp3, cwf3/syf1, cwf4/syf3, cwf5/ecm2, spp42/cwf6, cwf7/spf27, cwf8, cwf9, cwf10, cwf11, cwf12, prp45/cwf13, cwf14, cwf15, cwf16, cwf17, cwf18, cwf19, cwf20, cwf21, cwf22, cwf23, cwf24, cwf25, cwf26, cyp7/cwf27, cwf28, cwf29/ist3, lea1, msl1, prp5/cwf1, prp10, prp12/sap130, prp17, prp22, sap61, sap62, sap114, sap145, slu7, smb1, smd1, smd3, smf1, smg1 and syf2.

The protein localises to the nucleus. Its function is as follows. Involved in mRNA splicing where it associates with cdc5 and the other cwf proteins as part of the spliceosome. The sequence is that of Pre-mRNA-splicing factor cwf14 (cwf14) from Schizosaccharomyces pombe (strain 972 / ATCC 24843) (Fission yeast).